A 104-amino-acid polypeptide reads, in one-letter code: Iron-sulfur cluster assembly protein CyaY (104 aa).

It belongs to the frataxin family.

Involved in iron-sulfur (Fe-S) cluster assembly. May act as a regulator of Fe-S biogenesis. This is Iron-sulfur cluster assembly protein CyaY from Aeromonas hydrophila subsp. hydrophila (strain ATCC 7966 / DSM 30187 / BCRC 13018 / CCUG 14551 / JCM 1027 / KCTC 2358 / NCIMB 9240 / NCTC 8049).